A 181-amino-acid polypeptide reads, in one-letter code: MTEEHVVLLDEQDKPSGTLEKYAAHTLNTPLHLAFSCWLFNEDGQLLVTRRSLSKKAWPGVWTNSVCGHPQQDETTEEAIIRRCRFELGVEITDLTPVYPHFSYRATDPNGIVENEVCPVFAARATSVLQVNSEEVMDYQWSEFKSVWKSLLATPWAFSPWMVMQASDEQARERLLDYCQR.

Mn(2+)-binding residues include H25 and H32. Residues 30–164 form the Nudix hydrolase domain; the sequence is PLHLAFSCWL…PWAFSPWMVM (135 aa). C67 is an active-site residue. H69 contributes to the Mn(2+) binding site. E87 contributes to the Mg(2+) binding site. 2 residues coordinate Mn(2+): E114 and E116. E116 is a catalytic residue.

Belongs to the IPP isomerase type 1 family. In terms of assembly, homodimer. Requires Mg(2+) as cofactor. The cofactor is Mn(2+).

Its subcellular location is the cytoplasm. The enzyme catalyses isopentenyl diphosphate = dimethylallyl diphosphate. It participates in isoprenoid biosynthesis; dimethylallyl diphosphate biosynthesis; dimethylallyl diphosphate from isopentenyl diphosphate: step 1/1. Catalyzes the 1,3-allylic rearrangement of the homoallylic substrate isopentenyl (IPP) to its highly electrophilic allylic isomer, dimethylallyl diphosphate (DMAPP). This Salmonella paratyphi B (strain ATCC BAA-1250 / SPB7) protein is Isopentenyl-diphosphate Delta-isomerase.